Reading from the N-terminus, the 333-residue chain is 2-oxoglutarate-dependent dioxygenase 21, chloroplastic (333 aa).

Residues 1–43 constitute a chloroplast transit peptide; sequence MPAVAGSLYMASQHKGVPPPLPPPPRPLPVINLGRLTMDSASR. The Fe2OG dioxygenase domain occupies 180-281; sequence GVQFVALNNY…RISIASIHGL (102 aa). Positions 205, 207, and 262 each coordinate Fe cation. 2-oxoglutarate is bound at residue arginine 272.

Belongs to the iron/ascorbate-dependent oxidoreductase family. Fe(2+) is required as a cofactor. L-ascorbate serves as cofactor. Expressed in roots.

It is found in the plastid. Its subcellular location is the chloroplast. The catalysed reaction is melatonin + 2-oxoglutarate + O2 = 2-hydroxymelatonin + succinate + CO2. In terms of biological role, involved in melatonin degradation. Catalyzes the hydroxylation of melatonin to produce 2-hydroxymelatonin. The sequence is that of 2-oxoglutarate-dependent dioxygenase 21, chloroplastic from Oryza sativa subsp. japonica (Rice).